The following is a 334-amino-acid chain: ADP-L-glycero-D-manno-heptose-6-epimerase (334 aa).

NADP(+) is bound by residues 11–12 (FI), 32–33 (DN), Lys39, Lys54, 77–81 (QGACS), and Asn94. Catalysis depends on Tyr141, which acts as the Proton acceptor. NADP(+) is bound at residue Lys145. Asn171 is a binding site for substrate. NADP(+) is bound by residues Val172 and Lys180. The active-site Proton acceptor is Lys180. Substrate contacts are provided by residues Arg182, His189, 203–206 (FGSN), Arg216, and Tyr295.

It belongs to the NAD(P)-dependent epimerase/dehydratase family. HldD subfamily. As to quaternary structure, homopentamer. It depends on NADP(+) as a cofactor.

It carries out the reaction ADP-D-glycero-beta-D-manno-heptose = ADP-L-glycero-beta-D-manno-heptose. Its pathway is nucleotide-sugar biosynthesis; ADP-L-glycero-beta-D-manno-heptose biosynthesis; ADP-L-glycero-beta-D-manno-heptose from D-glycero-beta-D-manno-heptose 7-phosphate: step 4/4. In terms of biological role, catalyzes the interconversion between ADP-D-glycero-beta-D-manno-heptose and ADP-L-glycero-beta-D-manno-heptose via an epimerization at carbon 6 of the heptose. This chain is ADP-L-glycero-D-manno-heptose-6-epimerase, found in Neisseria meningitidis serogroup C (strain 053442).